The primary structure comprises 89 residues: Small ribosomal subunit protein uS15 (89 aa).

It belongs to the universal ribosomal protein uS15 family. In terms of assembly, part of the 30S ribosomal subunit. Forms a bridge to the 50S subunit in the 70S ribosome, contacting the 23S rRNA.

Functionally, one of the primary rRNA binding proteins, it binds directly to 16S rRNA where it helps nucleate assembly of the platform of the 30S subunit by binding and bridging several RNA helices of the 16S rRNA. Forms an intersubunit bridge (bridge B4) with the 23S rRNA of the 50S subunit in the ribosome. The polypeptide is Small ribosomal subunit protein uS15 (Limosilactobacillus fermentum (strain NBRC 3956 / LMG 18251) (Lactobacillus fermentum)).